The sequence spans 447 residues: MGTRSHYLDLGFLLLLFLPAECLGAEGRLAHKLFRDLFANYTSALRPVADTDQTLNVTLEVTLSQIIDMDERNQVLTLYLWIRQEWTDAYLHWDPKAYGDLDAIRIPSRLVWRPDIVLYNKADTQPPASASTNVVVRHDGAVRWDAPAITRSSCRVDVSAFPFDAQRCGLTFGSWTHGGHQLDVRPRGTSASLADFVENVEWRVLGMPARRRVLTYGCCSEPYPDVTFTLLLRRRAAAYVCNLLLPCVFISLLAPLAFHLPADSGEKVSLGVTVLLALTVFQLILAESMPPAESVPLIGKYYMATMTMVTFSTALTILIMNLHYCGPNAHPVPAWARVLLLGHLAKGLCVRERGEPCGQSKPLESAPSLQPPPASPAGPCHEPRCLCHQEALLHHIASIASTFRSHRAAQRRHEDWKRLARVMDRFFLGIFFCMALVMSLIVLVQAL.

The signal sequence occupies residues 1 to 24; sequence MGTRSHYLDLGFLLLLFLPAECLG. Topologically, residues 25 to 237 are extracellular; the sequence is AEGRLAHKLF…FTLLLRRRAA (213 aa). 2 N-linked (GlcNAc...) asparagine glycosylation sites follow: Asn-40 and Asn-56. Cystine bridges form between Cys-154–Cys-168 and Cys-218–Cys-219. The next 3 helical transmembrane spans lie at 238-258, 268-288, and 302-322; these read AYVC…PLAF, VSLG…LAES, and YMAT…IMNL. At 323-425 the chain is on the cytoplasmic side; that stretch reads HYCGPNAHPV…WKRLARVMDR (103 aa). A helical transmembrane segment spans residues 426-446; the sequence is FFLGIFFCMALVMSLIVLVQA.

The protein belongs to the ligand-gated ion channel (TC 1.A.9) family. Acetylcholine receptor (TC 1.A.9.1) subfamily. Alpha-10/CHRNA10 sub-subfamily. In terms of assembly, forms homo- or heterooligomeric channels in conjunction with CHRNA10. The native outer hair cell receptor may be composed of CHRNA9:CHRNA10 heterooligomers. Found in the stoichiometric form (CHRNA9)2:(CHRNA10)3. In terms of tissue distribution, expressed in the outer hair cells of the cochlea and the neurons of dorsal root ganglia.

It localises to the synaptic cell membrane. The protein resides in the cell membrane. It carries out the reaction Ca(2+)(in) = Ca(2+)(out). The enzyme catalyses Mg(2+)(in) = Mg(2+)(out). It catalyses the reaction K(+)(in) = K(+)(out). The catalysed reaction is Na(+)(in) = Na(+)(out). Activated by a myriad of ligands such as acetylcholine. AChR activity is inhibited by the antagonist alpha-conotoxins RgIA and GeXXA, small disulfide-constrained peptides from cone snails. Component of neuronal acetylcholine receptors (nAChRs) that function as pentameric, ligand-gated cation channels with high calcium permeability among other activities. nAChRs are excitatory neurotrasnmitter receptors formed by a collection of nAChR subunits known to mediate synaptic transmission in the nervous system and the neuromuscular junction. Each nAchR subunit confers differential attributes to channel properties, including activation, deactivation and desensitization kinetics, pH sensitivity, cation permeability, and binding to allosteric modulators. Forms heteropentamers with CHRNA9. Expressed in the inner ear, in sympathetic neurons and in other non-neuronal cells, such as skin keratinocytes and lymphocytes. nAChR formed by CHRNA9:CHRNA10 mediate central nervous system control of auditory and vestibular sensory processing. The channel is permeable to a range of divalent cations including calcium, the influx of which may activate a potassium current which hyperpolarizes the cell membrane. In the ear, mediates synaptic transmission between efferent olivocochlear fibers and hair cells of the cochlea, this may lead to a reduction in basilar membrane motion, altering the activity of auditory nerve fibers and reducing the range of dynamic hearing. This may protect against acoustic trauma. May also regulate keratinocyte adhesion. The sequence is that of Neuronal acetylcholine receptor subunit alpha-10 (Chrna10) from Rattus norvegicus (Rat).